The following is an 86-amino-acid chain: CLAVATA3/ESR (CLE)-related protein 7 (86 aa).

The first 22 residues, 1–22 (MASKALLLFVMLTFLLVIEMEG), serve as a signal peptide directing secretion. Asn-46 is a glycosylation site (N-linked (GlcNAc...) asparagine). Positions 63–86 (VDRFSPGGPDPQHHSYPLSSKPRI) are disordered. A hydroxyproline mark is found at Pro-68 and Pro-71. The O-linked (Ara...) hydroxyproline glycan is linked to Pro-71.

This sequence belongs to the CLV3/ESR signal peptide family. In terms of processing, the O-glycosylation (arabinosylation) of the hydroxyproline Pro-71 enhances binding affinity of the CLE7p peptide for its receptor. In terms of tissue distribution, expressed in roots and seedlings.

The protein localises to the secreted. It localises to the extracellular space. Functionally, extracellular signal peptide that regulates cell fate. This is CLAVATA3/ESR (CLE)-related protein 7 from Arabidopsis thaliana (Mouse-ear cress).